A 284-amino-acid chain; its full sequence is MEMO1 family protein Saci_0089 (284 aa).

This sequence belongs to the MEMO1 family.

This Sulfolobus acidocaldarius (strain ATCC 33909 / DSM 639 / JCM 8929 / NBRC 15157 / NCIMB 11770) protein is MEMO1 family protein Saci_0089.